The primary structure comprises 263 residues: Hydroxyacylglutathione hydrolase (263 aa).

Zn(2+)-binding residues include histidine 55, histidine 57, aspartate 59, histidine 60, histidine 117, aspartate 134, and histidine 172.

Belongs to the metallo-beta-lactamase superfamily. Glyoxalase II family. Monomer. Zn(2+) is required as a cofactor.

The enzyme catalyses an S-(2-hydroxyacyl)glutathione + H2O = a 2-hydroxy carboxylate + glutathione + H(+). It participates in secondary metabolite metabolism; methylglyoxal degradation; (R)-lactate from methylglyoxal: step 2/2. Its function is as follows. Thiolesterase that catalyzes the hydrolysis of S-D-lactoyl-glutathione to form glutathione and D-lactic acid. This Shewanella baltica (strain OS223) protein is Hydroxyacylglutathione hydrolase.